We begin with the raw amino-acid sequence, 570 residues long: Interleukin-1 receptor accessory protein (570 aa).

Positions 1–20 (MGLLWYLMSLSFYGILQSHA) are cleaved as a signal peptide. 3 Ig-like C2-type domains span residues 21-128 (SERC…VAFP), 139-230 (NSAM…RTVT), and 243-348 (PQIY…AKVK). Residues 21–367 (SERCDDWGLD…VELACGFGAT (347 aa)) lie on the Extracellular side of the membrane. Intrachain disulfides connect Cys-24-Cys-122, Cys-47-Cys-114, Cys-137-Cys-181, Cys-160-Cys-212, and Cys-266-Cys-332. Asn-57 is a glycosylation site (N-linked (GlcNAc...) asparagine). The essential for interaction with PTPRD stretch occupies residues 69–85 (IWYWTRQDRDLEEPINF). N-linked (GlcNAc...) asparagine glycans are attached at residues Asn-107, Asn-111, and Asn-118. 3 N-linked (GlcNAc...) asparagine glycosylation sites follow: Asn-196, Asn-209, and Asn-299. The helical transmembrane segment at 368 to 388 (VFLVVVLIVVYHVYWLEMVLF) threads the bilayer. At 389–570 (YRAHFGTDET…GLSYSSLKNV (182 aa)) the chain is on the cytoplasmic side. The region spanning 403 to 546 (KEYDIYVSYA…RFWKQLQVAM (144 aa)) is the TIR domain. The active site involves Glu-482. Residues 550-570 (KSPRWSSNDKQGLSYSSLKNV) form a disordered region. Residues 553 to 570 (RWSSNDKQGLSYSSLKNV) show a composition bias toward polar residues.

It belongs to the interleukin-1 receptor family. As to quaternary structure, the interleukin-36 receptor complex is a heterodimer of IL1RL2 and IL1RAP; the association is inhibited by IL36RN. The interleukin-1 receptor complex is a heterodimer of IL1R1 and IL1RAP. Associates with IL1R2 to form a non-signaling interleukin-1 receptor complex. Interacts with IL-33-bound IL1RL1 to form the minimal interleukin-33 signaling complex with a 1:1:1 stoichiometry. Interacts with KIT (independently of stimulation with KITLG/SCF). A mast cell-specific KITLG/SCF-induced interleukin-33 signaling complex contains IL1RL1, IL1RAP, KIT and MYD88. Interacts (via the first immunoglobilin domain) with PTPRD (via the third immunoglobilin domain); induces pre- and postsynaptic differentiation of neurons. In terms of tissue distribution, detected in lung, brain, spleen, thymus and liver. Expressed in brain endothelial cells, astrocytes, microglia and neurons. Isoform 3 is predominantly expressed in brain; expressed in hippocampal neurons.

The protein resides in the cell membrane. It is found in the secreted. The enzyme catalyses NAD(+) + H2O = ADP-D-ribose + nicotinamide + H(+). Its function is as follows. Coreceptor for IL1RL2 in the IL-36 signaling system. Coreceptor with IL1R1 in the IL-1 signaling system. Associates with IL1R1 bound to IL1B to form the high affinity interleukin-1 receptor complex which mediates interleukin-1-dependent activation of NF-kappa-B and other pathways. Signaling involves the recruitment of adapter molecules such as TOLLIP, MYD88, and IRAK1 or IRAK2 via the respective TIR domains of the receptor/coreceptor subunits. Recruits TOLLIP to the signaling complex. Does not bind to interleukin-1 alone; binding of IL1RN to IL1R1, prevents its association with IL1R1 to form a signaling complex. The cellular response is modulated through a non-signaling association with the membrane IL1R2 decoy receptor. Secreted forms (isoforms 2 and 3) associate with secreted ligand-bound IL1R2 and increase the affinity of secreted IL1R2 for IL1B; this complex formation may be the dominant mechanism for neutralization of IL1B by secreted/soluble receptors. Coreceptor for IL1RL1 in the IL-33 signaling system. Can bidirectionally induce pre- and postsynaptic differentiation of neurons by trans-synaptically binding to PTPRD. May play a role in IL1B-mediated costimulation of IFNG production from T-helper 1 (Th1) cells. In terms of biological role, associates with secreted ligand-bound IL1R2 and increases the affinity of secreted IL1R2 for IL1B; this complex formation may be the dominant mechanism for neutralization of IL1B by secreted/soluble receptors. Enhances the ability of secreted IL1R1 to inhibit IL-33 signaling. Required for Src phosphorylation by IL1B. Required for IL1B-potentiated NMDA-induced calcium influx in neurons acting in cooperation with IL1R1 isoform 2 to mediate Akt kinase activation. The protein is Interleukin-1 receptor accessory protein (Il1rap) of Mus musculus (Mouse).